The following is a 120-amino-acid chain: MPVYVDYETPADLAERSLEALEVARDTGTVKKGTNETTKAVERGNADLVIVAEDVSPEEIVMHLPELAEEKGIPVVFVDTQDEVGHAAGLEVGSAAAAVIDAGDADDDVEDIGEKVAELR.

Belongs to the eukaryotic ribosomal protein eL8 family. Part of the 50S ribosomal subunit. Probably part of the RNase P complex.

The protein localises to the cytoplasm. Multifunctional RNA-binding protein that recognizes the K-turn motif in ribosomal RNA, the RNA component of RNase P, box H/ACA, box C/D and box C'/D' sRNAs. The chain is Large ribosomal subunit protein eL8 from Halorubrum lacusprofundi (strain ATCC 49239 / DSM 5036 / JCM 8891 / ACAM 34).